The following is a 180-amino-acid chain: MIIYLHGFDSNSPGNHEKVLQLQFIDPDVRLVSYSTRHPKHDMQHLLKEVDKMLQLNVDERPLICGVGLGGYWAERIGFLCDIRQVVFNPNLFPYENMEGKIDRPEEYADIDTKCVTNFREKNRDRCLVILSRHDEALDSQRSAQALHPYYEIVWDEEQTHKFKNISPHLQRIKAFKTLG.

Belongs to the UPF0227 family.

The protein is UPF0227 protein YcfP of Salmonella gallinarum (strain 287/91 / NCTC 13346).